Here is a 127-residue protein sequence, read N- to C-terminus: Secreted RxLR effector protein 3 (127 aa).

The signal sequence occupies residues 1–20 (MRPPLLLFLTVTVLVSCASA). Residues 30–48 (RSLRSIKTTTNDDAAEEER) carry the RxLR-dEER motif.

The protein belongs to the RxLR effector family.

The protein localises to the secreted. It is found in the host cell. Functionally, secreted effector that partially suppresses elicitor-induced cell death in host and enhances virulence of P.parasitica. The protein is Secreted RxLR effector protein 3 of Phytophthora nicotianae (Potato buckeye rot agent).